A 248-amino-acid polypeptide reads, in one-letter code: MADS-box transcription factor 8 (248 aa).

The region spanning 1–61 (MGRGRVELKR…GKLYEFCSGQ (61 aa)) is the MADS-box domain. The K-box domain occupies 90-180 (VQSSRNEYLK…RRKLEESNQL (91 aa)).

In terms of assembly, may interact with the K-box of MADS6 and MADS16. May interact with MADS13 and MADS18. Binds to FCA. As to expression, expressed in lodicules, stamens and carpels.

Its subcellular location is the nucleus. Probable transcription factor. May be involved in the control of flowering time. The protein is MADS-box transcription factor 8 (MADS8) of Oryza sativa subsp. japonica (Rice).